Consider the following 175-residue polypeptide: Microfibril-associated glycoprotein 3 (175 aa).

Residues 1–175 (FRTEGAEKLQ…KDGSFESCQL (175 aa)) are Cytoplasmic-facing. A disordered region spans residues 85 to 175 (KERPALNAQD…KDGSFESCQL (91 aa)). A compositionally biased stretch (polar residues) spans 145 to 175 (QDSSHFSPPDDTGSTESNSNYKDGSFESCQL).

Post-translationally, glycosylated.

The protein localises to the cell membrane. Component of the elastin-associated microfibrils. This is Microfibril-associated glycoprotein 3 (MFAP3) from Bos taurus (Bovine).